Consider the following 83-residue polypeptide: RNA-binding protein Hfq (83 aa).

The region spanning 10–70 (DAFLNQLRKE…ISTVSPSRPV (61 aa)) is the Sm domain.

The protein belongs to the Hfq family. Homohexamer.

In terms of biological role, RNA chaperone that binds small regulatory RNA (sRNAs) and mRNAs to facilitate mRNA translational regulation in response to envelope stress, environmental stress and changes in metabolite concentrations. Also binds with high specificity to tRNAs. The protein is RNA-binding protein Hfq of Desulforudis audaxviator (strain MP104C).